The sequence spans 675 residues: MTAPGFVEFPDSPFHLYQPYPPAGDQPGAIDALTEGVSDGLMFQTLLGVTGSGKTYTMANMIARLGRPALVLAPNKTLAAQLYAEMREFFPRNAVEYFVSYYDYYQPEAYVPTRDLFIEKDSSINEHIEQMRLSATKSLLERRDTVIVGTVSCIYGIGNPGDYHAMVLILRTGDRISRREVLARLVAMQYTRNDADFTRGVFRVRGETIDIFPAESPELALRLTLFDDEIESLELFDPLTGRVRQKLPRFTVYPGSHYVTPRETVLRAIETIKEELRERLAQLIADGKLVEAQRLEQRTRFDLEMLQELGFCKGIENYSRHLSGAAPGEPPPTLIDYLPADALMFIDESHVTIGQLGGMYRGDRSRKETLVQYGFRLPSALDNRPLRLEEFEARMRQCVFVSATPAAYEQEHADNVVEQVVRPTGLVDPIVEVRPAHTQVDDLLGEIHKRAALQERVLVTTLTKRMAEDLTDFLSEHGVRVRYLHSDIDTVERVEIIRDLRLGVFDVLVGINLLREGLDIPEVSLVAILDADKEGFLRSERSLIQTIGRAARNLNGRAILYADRITDSMRRAIDETERRRAKQIQHNTDHGITARGVSKAVRELIDGVVAPAGHDALESAVPAEVLTDEKAMAREIRRLEKLMMDHARNLEFEQAAAARDALNALKSRLLLDGVG.

In terms of domain architecture, Helicase ATP-binding spans 35–422 (EGVSDGLMFQ…ADNVVEQVVR (388 aa)). 48-55 (GVTGSGKT) is a binding site for ATP. Positions 101 to 124 (YYDYYQPEAYVPTRDLFIEKDSSI) match the Beta-hairpin motif. Residues 439-605 (QVDDLLGEIH…GVSKAVRELI (167 aa)) form the Helicase C-terminal domain. A UVR domain is found at 633–668 (AREIRRLEKLMMDHARNLEFEQAAAARDALNALKSR).

It belongs to the UvrB family. As to quaternary structure, forms a heterotetramer with UvrA during the search for lesions. Interacts with UvrC in an incision complex.

Its subcellular location is the cytoplasm. Functionally, the UvrABC repair system catalyzes the recognition and processing of DNA lesions. A damage recognition complex composed of 2 UvrA and 2 UvrB subunits scans DNA for abnormalities. Upon binding of the UvrA(2)B(2) complex to a putative damaged site, the DNA wraps around one UvrB monomer. DNA wrap is dependent on ATP binding by UvrB and probably causes local melting of the DNA helix, facilitating insertion of UvrB beta-hairpin between the DNA strands. Then UvrB probes one DNA strand for the presence of a lesion. If a lesion is found the UvrA subunits dissociate and the UvrB-DNA preincision complex is formed. This complex is subsequently bound by UvrC and the second UvrB is released. If no lesion is found, the DNA wraps around the other UvrB subunit that will check the other stand for damage. This chain is UvrABC system protein B, found in Bordetella bronchiseptica (strain ATCC BAA-588 / NCTC 13252 / RB50) (Alcaligenes bronchisepticus).